A 3567-amino-acid chain; its full sequence is Erythronolide synthase EryA2 (3567 aa).

Residues 30 to 455 (SDPIAIVSMA…GTNAHVIVEE (426 aa)) form the Ketosynthase family 3 (KS3) 1 domain. Module stretches follow at residues 33 to 1467 (IAIV…QHLR) and 1491 to 3485 (IAIV…EHLR). Cysteine 202 serves as the catalytic Acyl-thioester intermediate; for beta-ketoacyl synthase 1 activity. Active-site for beta-ketoacyl synthase 1 activity residues include histidine 337 and histidine 377. The acyltransferase 1 stretch occupies residues 560-880 (VFLFPGQGSQ…MATAHVSGVD (321 aa)). Catalysis depends on serine 651, which acts as the Acyl-ester intermediate; for acyltransferase 1 activity. The C2-type beta-ketoacyl reductase 1 stretch occupies residues 1132–1297 (GTVLVTGAAS…CTSVAWTPWA (166 aa)). Residue tyrosine 1267 is the For C2-type beta-ketoacyl reductase 1 and probable racemase activity of the active site. A disordered region spans residues 1364–1385 (GRGGQAEAEPDSGPTGEPAQRL). The Carrier 1 domain maps to 1395–1470 (ENLLELVANA…ALAQHLRARL (76 aa)). Serine 1430 bears the O-(pantetheine 4'-phosphoryl)serine mark. A Ketosynthase family 3 (KS3) 2 domain is found at 1488 to 1912 (SEPIAIVGIG…GTNAHVIVEE (425 aa)). The active-site Acyl-thioester intermediate; for beta-ketoacyl synthase 2 activity is the cysteine 1661. Residues histidine 1796 and histidine 1834 each act as for beta-ketoacyl synthase 2 activity in the active site. The tract at residues 2015–2331 (LVFPGQGAQW…NLLRAHVHGV (317 aa)) is acyltransferase 2. Serine 2105 acts as the Acyl-ester intermediate; for acyltransferase 2 activity in catalysis. Residues 2377-2502 (HPLLLAAVDV…GTLAQGVAAG (126 aa)) form an N-terminal hotdog fold region. Residues 2377-2645 (HPLLLAAVDV…SLVVRSTGEK (269 aa)) are dehydratase. A PKS/mFAS DH domain is found at 2377–2648 (HPLLLAAVDV…VRSTGEKWEQ (272 aa)). Residue histidine 2409 is the Proton acceptor; for dehydratase activity of the active site. A C-terminal hotdog fold region spans residues 2514–2648 (AVRIPLDDHY…VRSTGEKWEQ (135 aa)). Catalysis depends on aspartate 2571, which acts as the Proton donor; for dehydratase activity. The segment at 2831–3131 (GAIDSVAFEP…RGRHVGKLVL (301 aa)) is enoyl reductase. Residue tyrosine 2874 is the For enoyl reductase activity of the active site. Residues 2964 to 2973 (HAAAGGVGMA), 3149 to 3152 (TGTL), 3173 to 3176 (SRRG), 3202 to 3203 (DT), lysine 3250, and 3272 to 3273 (FS) each bind NADP(+). Residues 3141–3317 (GTVLITGGTG…AKALGWGLWA (177 aa)) form a beta-ketoacyl reductase 2 region. Catalysis depends on tyrosine 3287, which acts as the For beta-ketoacyl reductase 2 activity. Residues 3413–3488 (AGLAELVRSH…AVAEHLRDRL (76 aa)) form the Carrier 2 domain. At serine 3448 the chain carries O-(pantetheine 4'-phosphoryl)serine.

Homodimer. Erythronolide synthase is composed of EryAI, EryAII and EryAIII multimodular (2 modules) polypeptides each coding for a functional synthase subunit which participates in 2 of the six FAS-like elongation steps required for formation of the polyketide. Module 1, 2, 3, 4, 5, and 6 participating in biosynthesis steps 1, 2, 3, 4, 5, and 6, respectively. It depends on pantetheine 4'-phosphate as a cofactor.

The enzyme catalyses 6 (S)-methylmalonyl-CoA + propanoyl-CoA + 6 NADPH + 12 H(+) = 6-deoxyerythronolide B + 6 CO2 + 6 NADP(+) + 7 CoA + H2O. It functions in the pathway antibiotic biosynthesis; erythromycin biosynthesis. In terms of biological role, involved in the biosynthesis of antibiotic erythromycin via the biosynthesis of its aglycone precursor, 6-deoxyerythronolide B (6-dEB). This Saccharopolyspora erythraea (Streptomyces erythraeus) protein is Erythronolide synthase EryA2.